The chain runs to 408 residues: tRNA pseudouridine synthase D (408 aa).

Aspartate 82 (nucleophile) is an active-site residue. Residues 157-367 form the TRUD domain; the sequence is GVPNRFGEQR…MEGERRPLRV (211 aa).

The protein belongs to the pseudouridine synthase TruD family.

It catalyses the reaction uridine(13) in tRNA = pseudouridine(13) in tRNA. Functionally, responsible for synthesis of pseudouridine from uracil-13 in transfer RNAs. This is tRNA pseudouridine synthase D from Geobacter sulfurreducens (strain ATCC 51573 / DSM 12127 / PCA).